Consider the following 664-residue polypeptide: Putative membrane protein Bcell_0381 (664 aa).

Residues 588-616 show a composition bias toward acidic residues; it reads DVTQDENGEEKSEEDNKEEIVEENTEEDN. The segment at 588 to 622 is disordered; the sequence is DVTQDENGEEKSEEDNKEEIVEENTEEDNKEEKTI. The helical transmembrane segment at 636–656 threads the bilayer; sequence YQFLLAGIIMLVGGSCIYVFY.

It is found in the cell membrane. This Evansella cellulosilytica (strain ATCC 21833 / DSM 2522 / FERM P-1141 / JCM 9156 / N-4) (Bacillus cellulosilyticus) protein is Putative membrane protein Bcell_0381.